A 180-amino-acid chain; its full sequence is MRHKIITFILAVVVIIIIGNMIGGGGGSEATSKTSSSSKAETEKTYNIGDTVKTEKTEVTVTKVEDRDTVGTQYVEKKASEGGTIVAVQYTIKNVSKKPISSFSIPTVKLVDADGTSYDSDIDASVNYATETKVDNSKILSDLNPNIKVTGVKAFEVDKEAYAKGTWKLKFSNDVIVKIK.

The signal sequence occupies residues 1-30; that stretch reads MRHKIITFILAVVVIIIIGNMIGGGGGSEA. Residues 25–46 are disordered; the sequence is GGGSEATSKTSSSSKAETEKTY. A compositionally biased stretch (low complexity) spans 29–39; the sequence is EATSKTSSSSK.

The protein resides in the secreted. This is an uncharacterized protein from Bacillus subtilis (strain 168).